A 482-amino-acid polypeptide reads, in one-letter code: Phenylalanine--tRNA ligase alpha subunit (482 aa).

L-phenylalanine contacts are provided by residues T327, 366 to 368 (QIE), and Y406. E408 serves as a coordination point for Mg(2+). Residue F430 participates in L-phenylalanine binding.

The protein belongs to the class-II aminoacyl-tRNA synthetase family. Phe-tRNA synthetase alpha subunit type 2 subfamily. Tetramer of two alpha and two beta subunits. The cofactor is Mg(2+).

Its subcellular location is the cytoplasm. It catalyses the reaction tRNA(Phe) + L-phenylalanine + ATP = L-phenylalanyl-tRNA(Phe) + AMP + diphosphate + H(+). This Thermoplasma volcanium (strain ATCC 51530 / DSM 4299 / JCM 9571 / NBRC 15438 / GSS1) protein is Phenylalanine--tRNA ligase alpha subunit.